The following is a 504-amino-acid chain: Heat shock 70 kDa protein 14 (504 aa).

The protein belongs to the heat shock protein 70 family. In terms of assembly, component of ribosome-associated complex (RAC).

The protein resides in the cytoplasm. The protein localises to the cytosol. In terms of biological role, component of the ribosome-associated complex (RAC), a complex involved in folding or maintaining nascent polypeptides in a folding-competent state. The chain is Heat shock 70 kDa protein 14 (hspa14) from Danio rerio (Zebrafish).